A 324-amino-acid polypeptide reads, in one-letter code: Aldo-keto reductase family 1 member A1-A (324 aa).

Residues 10–19, T20, W21, and D44 contribute to the NADP(+) site; that span reads GQRMPTVGLG. Catalysis depends on Y49, which acts as the Proton donor. 12 residues coordinate NADP(+): S161, N162, S210, L212, S214, K262, S263, V264, T265, R268, Q271, and N272.

This sequence belongs to the aldo/keto reductase family.

Its subcellular location is the cytoplasm. The protein resides in the cytosol. It is found in the apical cell membrane. The enzyme catalyses a primary alcohol + NADP(+) = an aldehyde + NADPH + H(+). The catalysed reaction is S-nitroso-CoA + NADPH + H(+) = sulfinamide-CoA + NADP(+). It carries out the reaction S-nitrosoglutathione + NADPH + H(+) = S-(hydroxysulfenamide)glutathione + NADP(+). Functionally, catalyzes the NADPH-dependent reduction of a wide variety of carbonyl-containing compounds to their corresponding alcohols. Displays enzymatic activity towards endogenous metabolites such as aromatic and aliphatic aldehydes, ketones, monosaccharides and bile acids. Acts as an aldehyde-detoxification enzyme. Also acts as an inhibitor of protein S-nitrosylation by mediating degradation of S-nitroso-coenzyme A (S-nitroso-CoA), a cofactor required to S-nitrosylate proteins. Also acts as a S-nitroso-glutathione reductase by catalyzing the NADPH-dependent reduction of S-nitrosoglutathione. Displays no reductase activity towards retinoids. The chain is Aldo-keto reductase family 1 member A1-A (akr1a1a) from Danio rerio (Zebrafish).